The following is a 214-amino-acid chain: 3,4-dihydroxy-2-butanone 4-phosphate synthase (214 aa).

D-ribulose 5-phosphate is bound by residues 37 to 38 (RE), aspartate 42, 150 to 154 (RRGHT), and glutamate 174. Position 38 (glutamate 38) interacts with Mg(2+). Histidine 153 contacts Mg(2+).

This sequence belongs to the DHBP synthase family. As to quaternary structure, homodimer. The cofactor is Mg(2+). Requires Mn(2+) as cofactor.

The catalysed reaction is D-ribulose 5-phosphate = (2S)-2-hydroxy-3-oxobutyl phosphate + formate + H(+). The protein operates within cofactor biosynthesis; riboflavin biosynthesis; 2-hydroxy-3-oxobutyl phosphate from D-ribulose 5-phosphate: step 1/1. In terms of biological role, catalyzes the conversion of D-ribulose 5-phosphate to formate and 3,4-dihydroxy-2-butanone 4-phosphate. This Pasteurella multocida (strain Pm70) protein is 3,4-dihydroxy-2-butanone 4-phosphate synthase.